Here is a 764-residue protein sequence, read N- to C-terminus: MIKDFFILDFSYEIKGNTPLVYIWSVDDEGNSSVVIDNNFRPYFYIIYEGNENEIIENIKKNCEALQITKVKRKYLGNIVDALLIQTSTPTQIKKCREKISELNNIKGIFDADIRYTMRYSLDFDLRPFTWFRAEVNEVKFDGFRTKKAYILDKILSHYEGNMPELRTIGVDFQIYSKYGSLNPRKDPIVVMSLWSKEGPMQFSLDEGIDDLKIIRRFVDYILNYDPDIIFVYDSDLLPWKYITERASSLGVKIDIGRKIGSEVSVGTYGHYSISGRLNVDLTGLLVNERSLGHVDLIDVSNYLGISPSRYSFKWYEISRYWDNEKNRRIIREYSIENARSIYLLGNYLLSTYSELVKIVGLPLDKLSVASWGNRIETSLIRTATKSGELIPIRMDNPNRPSKIKKNIIIQPKVGIYTDVYVLDISSVYSLVIRKFNIAPDTLVKEQCDDCYSSPISNYKFKREPSGLYKTFLDELSNVRDSNKIKVIEELISSFNDYVHWVNARWYSREIASAFDEFSNEIIRFIIDLIKSSGLDVILANDLLIFVTGGSRDKVNELITKINSLYNLDVKVKIFYKSLLVLDNNRYAGLSEGDKIDIARKGEEDMNLCELARNIKRKIIEEILISKDVKKAIKLVKSTVIKLRRGEFDNEELITWAKIERDLNEYNNQLPFVTAARKAIQSGYLISKDSKIGYVIVKGLGPLNDRAEPFFLVKEKNRIDIEYYVDQIFRETLKLLKPLGVNEESLKKTNITDILDLFGASKKK.

It belongs to the DNA polymerase type-B family.

It catalyses the reaction DNA(n) + a 2'-deoxyribonucleoside 5'-triphosphate = DNA(n+1) + diphosphate. This Saccharolobus solfataricus (strain ATCC 35092 / DSM 1617 / JCM 11322 / P2) (Sulfolobus solfataricus) protein is DNA polymerase 3 (dpo3).